The primary structure comprises 367 residues: Methylthioribose-1-phosphate isomerase (367 aa).

Residues 54-56, Arg-91, and Gln-201 each bind substrate; that span reads RGA. Residue Asp-242 is the Proton donor of the active site. 252–253 contributes to the substrate binding site; that stretch reads NK.

The protein belongs to the eIF-2B alpha/beta/delta subunits family. MtnA subfamily.

It carries out the reaction 5-(methylsulfanyl)-alpha-D-ribose 1-phosphate = 5-(methylsulfanyl)-D-ribulose 1-phosphate. The protein operates within amino-acid biosynthesis; L-methionine biosynthesis via salvage pathway; L-methionine from S-methyl-5-thio-alpha-D-ribose 1-phosphate: step 1/6. Catalyzes the interconversion of methylthioribose-1-phosphate (MTR-1-P) into methylthioribulose-1-phosphate (MTRu-1-P). The sequence is that of Methylthioribose-1-phosphate isomerase from Acidiphilium cryptum (strain JF-5).